A 445-amino-acid chain; its full sequence is Phosphoglucosamine mutase (445 aa).

The active-site Phosphoserine intermediate is S99. Positions 99, 242, 244, and 246 each coordinate Mg(2+). S99 bears the Phosphoserine mark.

This sequence belongs to the phosphohexose mutase family. Requires Mg(2+) as cofactor. Activated by phosphorylation.

It catalyses the reaction alpha-D-glucosamine 1-phosphate = D-glucosamine 6-phosphate. Its function is as follows. Catalyzes the conversion of glucosamine-6-phosphate to glucosamine-1-phosphate. The polypeptide is Phosphoglucosamine mutase (Campylobacter jejuni (strain RM1221)).